A 113-amino-acid polypeptide reads, in one-letter code: UPF0060 membrane protein CV_3485 (113 aa).

4 helical membrane passes run 12-32, 37-57, 67-87, and 91-111; these read GLFV…WLVL, SLWL…LLTL, AAYG…VDGV, and RWDA…MLAP.

Belongs to the UPF0060 family.

It localises to the cell inner membrane. The protein is UPF0060 membrane protein CV_3485 of Chromobacterium violaceum (strain ATCC 12472 / DSM 30191 / JCM 1249 / CCUG 213 / NBRC 12614 / NCIMB 9131 / NCTC 9757 / MK).